A 346-amino-acid polypeptide reads, in one-letter code: NADH-quinone oxidoreductase subunit H (346 aa).

8 helical membrane-spanning segments follow: residues 6 to 26, 76 to 96, 128 to 148, 166 to 186, 198 to 218, 260 to 280, 289 to 309, and 324 to 344; these read ILFWLLKSGLFFFILITACAY, IMYLIAPAISMTCAIMAWSVV, ILFLFAISSLAVYGIIIAGWA, ISYELPLSMSVVSIVILTGSL, LWNIFKLPGFIAFCLFVVAMF, ITMSCVVTLLFFGGYQVPFGI, LFGLFFFLGKVLFFTFLFVWV, and LGWKKLIPWAVLNILIASLYI.

The protein belongs to the complex I subunit 1 family. In terms of assembly, NDH-1 is composed of 14 different subunits. Subunits NuoA, H, J, K, L, M, N constitute the membrane sector of the complex.

It is found in the cell inner membrane. The catalysed reaction is a quinone + NADH + 5 H(+)(in) = a quinol + NAD(+) + 4 H(+)(out). NDH-1 shuttles electrons from NADH, via FMN and iron-sulfur (Fe-S) centers, to quinones in the respiratory chain. The immediate electron acceptor for the enzyme in this species is believed to be ubiquinone. Couples the redox reaction to proton translocation (for every two electrons transferred, four hydrogen ions are translocated across the cytoplasmic membrane), and thus conserves the redox energy in a proton gradient. This subunit may bind ubiquinone. This is NADH-quinone oxidoreductase subunit H from Leptospira borgpetersenii serovar Hardjo-bovis (strain JB197).